We begin with the raw amino-acid sequence, 486 residues long: NADH-quinone oxidoreductase subunit N (486 aa).

Helical transmembrane passes span 11–31 (ALPE…DLFV), 44–64 (MLAL…YPVL), 74–94 (PIAS…MIYA), 103–123 (FLKG…CVMV), 128–148 (MLTL…LIAL), 163–183 (FVLG…VYGG), 206–226 (VSLG…AVPF), 238–258 (PTAV…VFVI), 267–287 (PAAV…LVVG), 300–320 (MLAY…LAAT), 328–348 (MFYA…LLAL), 371–391 (YALL…LVGF), 404–424 (VGLT…AFYY), and 452–472 (LVLG…NGLY).

The protein belongs to the complex I subunit 2 family. As to quaternary structure, NDH-1 is composed of 14 different subunits. Subunits NuoA, H, J, K, L, M, N constitute the membrane sector of the complex.

It localises to the cell inner membrane. It catalyses the reaction a quinone + NADH + 5 H(+)(in) = a quinol + NAD(+) + 4 H(+)(out). In terms of biological role, NDH-1 shuttles electrons from NADH, via FMN and iron-sulfur (Fe-S) centers, to quinones in the respiratory chain. The immediate electron acceptor for the enzyme in this species is believed to be ubiquinone. Couples the redox reaction to proton translocation (for every two electrons transferred, four hydrogen ions are translocated across the cytoplasmic membrane), and thus conserves the redox energy in a proton gradient. This is NADH-quinone oxidoreductase subunit N from Laribacter hongkongensis (strain HLHK9).